The chain runs to 285 residues: Hydroxyethylthiazole kinase (285 aa).

Methionine 43 provides a ligand contact to substrate. ATP contacts are provided by lysine 119 and serine 172. Substrate is bound at residue glycine 199.

It belongs to the Thz kinase family. It depends on Mg(2+) as a cofactor.

The enzyme catalyses 5-(2-hydroxyethyl)-4-methylthiazole + ATP = 4-methyl-5-(2-phosphooxyethyl)-thiazole + ADP + H(+). It functions in the pathway cofactor biosynthesis; thiamine diphosphate biosynthesis; 4-methyl-5-(2-phosphoethyl)-thiazole from 5-(2-hydroxyethyl)-4-methylthiazole: step 1/1. In terms of biological role, catalyzes the phosphorylation of the hydroxyl group of 4-methyl-5-beta-hydroxyethylthiazole (THZ). This chain is Hydroxyethylthiazole kinase, found in Desulfovibrio desulfuricans (strain ATCC 27774 / DSM 6949 / MB).